The chain runs to 383 residues: Lipid-A-disaccharide synthase (383 aa).

It belongs to the LpxB family.

The catalysed reaction is 2-N,3-O-bis[(3R)-3-hydroxytetradecanoyl]-alpha-D-glucosaminyl 1-phosphate + UDP-2-N,3-O-bis[(3R)-3-hydroxytetradecanoyl]-alpha-D-glucosamine = lipid A disaccharide (E. coli) + UDP + H(+). It catalyses the reaction a lipid X + a UDP-2-N,3-O-bis[(3R)-3-hydroxyacyl]-alpha-D-glucosamine = a lipid A disaccharide + UDP + H(+). It functions in the pathway glycolipid biosynthesis; lipid IV(A) biosynthesis; lipid IV(A) from (3R)-3-hydroxytetradecanoyl-[acyl-carrier-protein] and UDP-N-acetyl-alpha-D-glucosamine: step 5/6. In terms of biological role, condensation of UDP-2,3-diacylglucosamine and 2,3-diacylglucosamine-1-phosphate to form lipid A disaccharide, a precursor of lipid A, a phosphorylated glycolipid that anchors the lipopolysaccharide to the outer membrane of the cell. In Klebsiella pneumoniae (strain 342), this protein is Lipid-A-disaccharide synthase.